The following is a 264-amino-acid chain: Versicolorin reductase stcU (264 aa).

4 residues coordinate NADP(+): Ile23, Asp69, Asn96, and Arg129. Residues Ser145 and Ser146 each act as proton donor in the active site. Residues Tyr160, Lys164, Ile193, and Thr195 each coordinate NADP(+). Tyr160 (proton acceptor) is an active-site residue. The Lowers pKa of active site Tyr role is filled by Lys164.

Belongs to the short-chain dehydrogenases/reductases (SDR) family.

The enzyme catalyses (4S,8R)-2,13,16,20-tetrahydroxy-7,9-dioxapentacyclo[10.8.0.0(3,10).0(4,8).0(14,19)]icosa-1(12),2,5,10,13,16,19-heptaen-18-one + NADPH + H(+) = (4S,8R,16R)-2,13,16,20-tetrahydroxy-7,9-dioxapentacyclo[10.8.0.0(3,10).0(4,8).0(14,19)]icosa-1(12),2,5,10,13,19-hexaen-18-one + NADP(+). It participates in mycotoxin biosynthesis; sterigmatocystin biosynthesis. In terms of biological role, versicolorin reductase; part of the gene cluster that mediates the biosynthesis of sterigmatocystin (ST), a polyketide-derived furanocoumarin which is part of the most toxic and carcinogenic compounds among the known mycotoxins. The first step in the biosynthesis of sterigmatocystin is the production of hexanoate by the fatty acid synthase (FAS) units stcJ and stcK. The polyketide backbone is assembled by the non-reducing polyketide synthase stcA by condensation of the starter hexanoyl-CoA and 7 malonyl-CoA extender units followed by cyclization and release of norsolorinic acid. Norsolorinic acid is the first stable intermediate in the biosynthesis of sterigmatocystin and is converted into averantin (AVN) by the ketoreductase stcE which reduces the hexanoate ketone to an alcohol. Averantin is then oxidized into 5'-hydroxyaverantin (HAVN) by the cytochrome P450 monooxygenase stcF. 5'-hydroxyaverantin is further converted to 5'-oxyaverantin (OAVN) by the 5'-hydroxyaverantin dehydrogenase stcG. The next step is the conversion of OAVN into averufin (AVF) which is catalyzed by a yet to be identified enzyme. The cytochrome P450 monooxygenase stcB and the flavin-binding monooxygenase stcW are both required for the conversion of averufin to 1-hydroxyversicolorone. The esterase stcI probably catalyzes the formation of versiconal hemiacetal acetate from 1-hydroxyversicolorone. The oxydoreductase stcN then probably catalyzes the biosynthetic step from versiconal to versicolorin B (VERB). The next step is performed by the versicolorin B desaturase stcL to produce versicolorin A (VERA). The ketoreductase stcU and the cytochrome P450 monooxygenase stcS are involved in the conversion of versicolorin A to demethylsterigmatocystin. The Baeyer-Villiger oxidas stcQ and the reductase stcR might be involved in the biosynthetic step from versicolorin A to demethylsterigmatocystin. The final step in the biosynthesis of sterigmatocystin is the methylation of demethylsterigmatocystin catalyzed by the methyltransferase stcP. The sequence is that of Versicolorin reductase stcU from Emericella nidulans (strain FGSC A4 / ATCC 38163 / CBS 112.46 / NRRL 194 / M139) (Aspergillus nidulans).